The following is a 322-amino-acid chain: UDP-galactose transporter homolog 1 (322 aa).

5 consecutive transmembrane segments (helical) span residues 4 to 24, 43 to 63, 76 to 96, 105 to 125, and 129 to 149; these read FMRQ…SWAV, ALLS…WNWF, FLGY…FGYA, TVIL…VFVY, and FPPH…IFSY. The N-linked (GlcNAc...) asparagine glycan is linked to N152. 4 helical membrane-spanning segments follow: residues 164–184, 199–219, 250–270, and 290–310; these read SPIG…TNTT, MMIA…ISPF, LFIF…ITLT, and IQWL…GLKI. Residues N313 and N314 are each glycosylated (N-linked (GlcNAc...) asparagine).

This sequence belongs to the nucleotide-sugar transporter family. SLC35B subfamily.

It localises to the endoplasmic reticulum membrane. Functionally, may be involved in specific transport of UDP-Gal from the cytosol to the Golgi lumen. Involved in the maintenance of optimal conditions for the folding of secretory pathway proteins in the endoplasmic reticulum. This Schizosaccharomyces pombe (strain 972 / ATCC 24843) (Fission yeast) protein is UDP-galactose transporter homolog 1 (hut1).